The primary structure comprises 114 residues: Large ribosomal subunit protein uL22 (114 aa).

The protein belongs to the universal ribosomal protein uL22 family. In terms of assembly, part of the 50S ribosomal subunit.

This protein binds specifically to 23S rRNA; its binding is stimulated by other ribosomal proteins, e.g. L4, L17, and L20. It is important during the early stages of 50S assembly. It makes multiple contacts with different domains of the 23S rRNA in the assembled 50S subunit and ribosome. Its function is as follows. The globular domain of the protein is located near the polypeptide exit tunnel on the outside of the subunit, while an extended beta-hairpin is found that lines the wall of the exit tunnel in the center of the 70S ribosome. The sequence is that of Large ribosomal subunit protein uL22 from Alcanivorax borkumensis (strain ATCC 700651 / DSM 11573 / NCIMB 13689 / SK2).